The primary structure comprises 418 residues: MLSPTNSTSKTAPVPPQDSSKPVLISEEPQNQLLQKVARTALVVLLVVVTLGLILLFYSFSDLQSFPWCCQTRPSTKEQPTISIPVPLPSPPLAVPRPSTPPPPVISRPSMPPAPTPAISPPSTPSAPKPSTPPPLPPKAPKPVKTQEDLLPFVPEQVFVEMYEDMARRRTIEALVPAWDSDIIFKCLCYFHTLYQGLIPLETFPPATIFNFKQKIISILEDKKAVLRGEPIKGSLPICCSEENYRRHLHGTTLLPVFMWYHPTPKTLSDTMQTMKQLAIKGSVGASHWLLVIVDIQARRLVYFDSLYNYVMSPEDMEKDLQSFAQQLDQVYPAYDSQKFSVKIAAKEVIQKGSGSSCGAWCCQFLHWYLRDPFTDALNDLPVDSVERHENLASFVQACEAAVQDLPELFWPEAKALF.

A compositionally biased stretch (polar residues) spans 1–11 (MLSPTNSTSKT). The segment at 1-23 (MLSPTNSTSKTAPVPPQDSSKPV) is disordered. Residues 40 to 60 (TALVVLLVVVTLGLILLFYSF) form a helical membrane-spanning segment. The tract at residues 72-145 (TRPSTKEQPT…LPPKAPKPVK (74 aa)) is disordered. Over residues 86–141 (VPLPSPPLAVPRPSTPPPPVISRPSMPPAPTPAISPPSTPSAPKPSTPPPLPPKAP) the composition is skewed to pro residues. Active-site residues include H288, D305, and C358.

This sequence belongs to the peptidase C48 family.

The protein resides in the secreted. It localises to the host cell. It is found in the membrane. Its function is as follows. Effector proteins function to alter host cell physiology and promote bacterial survival in host tissues. This protease possesses deubiquitinating and deneddylating activities. The polypeptide is Deubiquitinase and deneddylase Dub1 (cdu1) (Chlamydia trachomatis serovar E (strain Sweden2)).